The chain runs to 319 residues: Protease HtpX homolog (319 aa).

A run of 2 helical transmembrane segments spans residues 3 to 23 (LTVL…AWAL) and 32 to 52 (TGVA…QWLF). A Zn(2+)-binding site is contributed by His134. Glu135 is a catalytic residue. His138 provides a ligand contact to Zn(2+). A run of 2 helical transmembrane segments spans residues 146-166 (VILA…TLVW) and 182-202 (MALV…QLIV). Glu210 serves as a coordination point for Zn(2+).

This sequence belongs to the peptidase M48B family. Zn(2+) serves as cofactor.

The protein resides in the cell membrane. The sequence is that of Protease HtpX homolog from Aeropyrum pernix (strain ATCC 700893 / DSM 11879 / JCM 9820 / NBRC 100138 / K1).